We begin with the raw amino-acid sequence, 249 residues long: Vesicle-associated membrane protein-associated protein A (249 aa).

The residue at position 2 (alanine 2) is an N-acetylalanine. At 2 to 227 (ASASGAMAKH…VSFRDNVTSP (226 aa)) the chain is on the cytoplasmic side. An MSP domain is found at 14-131 (ILVLDPPSDL…MDSKLRCVFE (118 aa)). Residues 50–53 (KVKT) are phosphorylated FFAT motif binding. Lysine 125 carries the post-translational modification N6-acetyllysine. Positions 135–144 (ENDKLNDMEP) are enriched in basic and acidic residues. The segment at 135–166 (ENDKLNDMEPSKAVPLNASKQDGPLPKPHSVS) is disordered. Position 166 is a phosphoserine (serine 166). Residues 168–207 (NDTETRKLMEECKRLQGEMMKLSEENRHLRDEGLRLRKVA) are a coiled coil. Threonine 170 is modified (phosphothreonine). Serine 214, serine 216, and serine 219 each carry phosphoserine. The helical; Anchor for type IV membrane protein transmembrane segment at 228–248 (LPSLLVVIAAIFIGFFLGKFI) threads the bilayer.

This sequence belongs to the VAMP-associated protein (VAP) (TC 9.B.17) family. Homodimer; disulfide-linked. Heterodimer with VAPB. Interacts with VAMP1, VAMP2, STX1A, BET1, SEC22C and with the C-terminal domain of OCLN. Interacts (via MSP domain) with OSBPL1A (via FFAT motif). Interacts (via MSP domain) with ZFYVE27; may retain ZFYVE27 in the endoplasmic reticulum and regulate its function in cell projections formation. Interacts with OSBP. Interacts (via C-terminus) with RSAD2/viperin (via C-terminus). Interacts with IFITM3. Interacts with OSBPL3 (phosphorylated form). Interacts with KIF5A in a ZFYVE27-dependent manner. Interacts (via MSP domain) with STARD3 (via phosphorylated FFAT motif); this interaction recruits VAPA to the endosome. Interacts with STARD3NL (via FFAT motif). Interacts with CERT1. Interacts with PLEKHA3 and SACM1L to form a ternary complex. Interacts with VPS13A (via FFAT motif). Interacts with RB1CC1 (via phosphorylated FFAT motif), MIGA2 (via phosphorylated FFAT motif), RMDN3 (via phosphorylated FFAT motif), KCNB1 (via phosphorylated FFAT motif) and KCNB2 (via phosphorylated FFAT motif). Interacts (via MSP domain) with WDR44; the interactions connect the endoplasmic reticulum (ER) with the endosomal tubule. In terms of tissue distribution, ubiquitous.

The protein localises to the endoplasmic reticulum membrane. It is found in the cell membrane. Its subcellular location is the cell junction. The protein resides in the tight junction. It localises to the nucleus membrane. Its function is as follows. Endoplasmic reticulum (ER)-anchored protein that mediates the formation of contact sites between the ER and endosomes via interaction with FFAT motif-containing proteins such as STARD3 or WDR44. STARD3-VAPA interaction enables cholesterol transfer from the ER to endosomes. Via interaction with WDR44 participates in neosynthesized protein export. In addition, recruited to the plasma membrane through OSBPL3 binding. The OSBPL3-VAPA complex stimulates RRAS signaling which in turn attenuates integrin beta-1 (ITGB1) activation at the cell surface. With OSBPL3, may regulate ER morphology. May play a role in vesicle trafficking. The chain is Vesicle-associated membrane protein-associated protein A from Rattus norvegicus (Rat).